The chain runs to 351 residues: Translation initiation factor eIF2B subunit beta (351 aa).

The protein belongs to the eIF-2B alpha/beta/delta subunits family. In terms of assembly, component of the translation initiation factor 2B (eIF2B) complex which is a heterodecamer of two sets of five different subunits: alpha, beta, gamma, delta and epsilon. Subunits alpha, beta and delta comprise a regulatory subcomplex and subunits epsilon and gamma comprise a catalytic subcomplex. Within the complex, the hexameric regulatory complex resides at the center, with the two heterodimeric catalytic subcomplexes bound on opposite sides.

Its subcellular location is the cytoplasm. The protein localises to the cytosol. Its activity is regulated as follows. Activated by the chemical integrated stress response (ISR) inhibitor ISRIB which stimulates guanine nucleotide exchange factor activity for both phosphorylated and unphosphorylated eIF2. Its function is as follows. Acts as a component of the translation initiation factor 2B (eIF2B) complex, which catalyzes the exchange of GDP for GTP on eukaryotic initiation factor 2 (eIF2) gamma subunit. Its guanine nucleotide exchange factor activity is repressed when bound to eIF2 complex phosphorylated on the alpha subunit, thereby limiting the amount of methionyl-initiator methionine tRNA available to the ribosome and consequently global translation is repressed. This chain is Translation initiation factor eIF2B subunit beta (Eif2b2), found in Mus musculus (Mouse).